A 397-amino-acid chain; its full sequence is Protein Rep52 (397 aa).

The 156-residue stretch at 84–239 (DPQYAASVFL…LDHDFGKVTK (156 aa)) folds into the SF3 helicase domain. 110 to 117 (GPATTGKT) is a binding site for ATP. The interval 265–296 (GGAKKRPAPSDADISEPKRVRESVAQPSTSDA) is disordered.

As to quaternary structure, homooligomer. Interacts with host PRKX.

The protein localises to the host nucleus. Its function is as follows. Plays a critical role during packaging of viral DNA into empty capsids, where they are thought to be part of the packaging motor complex. The single stranded genomic DNA is packaged in a 3' to 5' direction and requires the association between viral DNA and Rep40. Regulates host PKA activity by interacting with host PRKX as a mechanism to interfere with helper virus propagation and to promote its own replication. The sequence is that of Protein Rep52 (Rep52) from Mammalia (AAV-2).